A 365-amino-acid chain; its full sequence is Anhydro-N-acetylmuramic acid kinase (365 aa).

Position 12-19 (12-19 (GTSLDGID)) interacts with ATP.

Belongs to the anhydro-N-acetylmuramic acid kinase family.

The catalysed reaction is 1,6-anhydro-N-acetyl-beta-muramate + ATP + H2O = N-acetyl-D-muramate 6-phosphate + ADP + H(+). It participates in amino-sugar metabolism; 1,6-anhydro-N-acetylmuramate degradation. It functions in the pathway cell wall biogenesis; peptidoglycan recycling. Catalyzes the specific phosphorylation of 1,6-anhydro-N-acetylmuramic acid (anhMurNAc) with the simultaneous cleavage of the 1,6-anhydro ring, generating MurNAc-6-P. Is required for the utilization of anhMurNAc either imported from the medium or derived from its own cell wall murein, and thus plays a role in cell wall recycling. The polypeptide is Anhydro-N-acetylmuramic acid kinase (Rhizorhabdus wittichii (strain DSM 6014 / CCUG 31198 / JCM 15750 / NBRC 105917 / EY 4224 / RW1) (Sphingomonas wittichii)).